The sequence spans 798 residues: Iron-regulated transcriptional activator AFT2 (798 aa).

Disordered regions lie at residues 142-274 (RSNK…KKLK), 331-365 (YPQP…QENN), 449-545 (NVDL…LPGS), 642-718 (QQQQ…NNIN), and 748-798 (QGNP…GPGW). The span at 153–165 (EIANTPSVTSYSP) shows a compositional bias: polar residues. Low complexity predominate over residues 193–223 (STQSTRSSSSSDGSSIVSFGSLTSQSSSTSL). The segment covering 256-274 (PVKRKNMKANTMKKSKKLK) has biased composition (basic residues). The segment covering 449–460 (NVDLEQNGSNEN) has biased composition (polar residues). Residues 476-517 (ENQFSYQSQIQNQRQNQNQNQGQNQNQNQSQSQTPGQNSNQN) are compositionally biased toward low complexity. Polar residues-rich tracts occupy residues 518–543 (DSQT…NWLP) and 646–656 (PMFSMQNSGQQ). 2 stretches are compositionally biased toward low complexity: residues 657 to 695 (LPPL…TLNP) and 705 to 718 (NSTN…NNIN). Residues 748 to 773 (QGNPTNSNQSMVNSIMTTNSNKDGTA) are compositionally biased toward polar residues. The segment covering 774-789 (TSNNNSSGNTSNNLLN) has biased composition (low complexity).

The protein resides in the nucleus. Its function is as follows. Transcription factor involved in iron metabolism, oxidative stress, surface adhesion, hyphal development and virulence. Functions as a negative regulator of MRS4 expression through the CACCC AFT-type sequence in a gene dose-dependent fashion. Acts as a repressor in flocculation, plastic adhesion, and surface hydrophobicity. This chain is Iron-regulated transcriptional activator AFT2 (AFT2), found in Candida albicans (strain SC5314 / ATCC MYA-2876) (Yeast).